A 220-amino-acid chain; its full sequence is Ribosomal RNA small subunit methyltransferase J (220 aa).

S-adenosyl-L-methionine-binding positions include 55–56 (RD), 71–72 (ER), and Asp-123.

It belongs to the methyltransferase superfamily. RsmJ family.

Its subcellular location is the cytoplasm. The catalysed reaction is guanosine(1516) in 16S rRNA + S-adenosyl-L-methionine = N(2)-methylguanosine(1516) in 16S rRNA + S-adenosyl-L-homocysteine + H(+). In terms of biological role, specifically methylates the guanosine in position 1516 of 16S rRNA. This chain is Ribosomal RNA small subunit methyltransferase J, found in Rhodopseudomonas palustris (strain BisB5).